Here is a 152-residue protein sequence, read N- to C-terminus: Superoxide dismutase [Cu-Zn] (152 aa).

Cu cation-binding residues include His45, His47, and His62. Cys56 and Cys145 are disulfide-bonded. Residues His62, His70, His79, and Asp82 each contribute to the Zn(2+) site. His119 is a Cu cation binding site.

It belongs to the Cu-Zn superoxide dismutase family. In terms of assembly, homodimer. Requires Cu cation as cofactor. The cofactor is Zn(2+).

It localises to the cytoplasm. It catalyses the reaction 2 superoxide + 2 H(+) = H2O2 + O2. Functionally, destroys radicals which are normally produced within the cells and which are toxic to biological systems. The protein is Superoxide dismutase [Cu-Zn] (SODCC) of Ipomoea batatas (Sweet potato).